Here is a 631-residue protein sequence, read N- to C-terminus: ATP-dependent zinc metalloprotease FtsH (631 aa).

The Cytoplasmic portion of the chain corresponds to 1–5 (MKKSN). A helical transmembrane segment spans residues 6-26 (PWFVFFWITLLVIVLMFINFA). Residues 27-102 (RQGGNEVELE…LEFSATEKSG (76 aa)) lie on the Periplasmic side of the membrane. The helical transmembrane segment at 103 to 123 (WLGSLLLNWGPVVLLILFCFW) threads the bilayer. Residues 124–631 (MMRGMSMGNK…KVINEKVIIS (508 aa)) are Cytoplasmic-facing. 196–203 (GSPGTGKT) provides a ligand contact to ATP. H418 contributes to the Zn(2+) binding site. E419 is a catalytic residue. Residues H422 and D494 each contribute to the Zn(2+) site.

It in the central section; belongs to the AAA ATPase family. This sequence in the C-terminal section; belongs to the peptidase M41 family. In terms of assembly, homohexamer. Zn(2+) serves as cofactor.

It is found in the cell inner membrane. Acts as a processive, ATP-dependent zinc metallopeptidase for both cytoplasmic and membrane proteins. Plays a role in the quality control of integral membrane proteins. This is ATP-dependent zinc metalloprotease FtsH from Endomicrobium trichonymphae.